Here is a 204-residue protein sequence, read N- to C-terminus: UPF0637 protein SA0957 (204 aa).

The protein belongs to the UPF0637 family.

The sequence is that of UPF0637 protein SA0957 from Staphylococcus aureus (strain N315).